A 320-amino-acid chain; its full sequence is Tyrosine phosphatase H3 (320 aa).

One can recognise a Tyrosine-protein phosphatase domain in the interval 22-309 (NFWEFVRLEH…AFCYKAVRYA (288 aa)). The active-site Phosphocysteine intermediate is the Cys250.

This sequence belongs to the protein-tyrosine phosphatase family.

The enzyme catalyses O-phospho-L-tyrosyl-[protein] + H2O = L-tyrosyl-[protein] + phosphate. Suppresses host immune cell adhesion and phagocytosis. The polypeptide is Tyrosine phosphatase H3 (H3) (Microplitis demolitor (Parasitoid wasp)).